Reading from the N-terminus, the 373-residue chain is Ubiquitin domain-containing protein DSK2 (373 aa).

The Ubiquitin-like domain maps to 1-76 (MSLNIHIKSG…SVHLVKSQPK (76 aa)). Glycyl lysine isopeptide (Lys-Gly) (interchain with G-Cter in ubiquitin) cross-links involve residues Lys13 and Lys76. Residues 221–270 (DPNAGMGSAGGAASAFPAPGGDAPEEGSNTNTTSSSNTGNNAGTNAGTNA) form a disordered region. The segment covering 231 to 270 (GAASAFPAPGGDAPEEGSNTNTTSSSNTGNNAGTNAGTNA) has biased composition (low complexity). Positions 327–371 (PPEERYEHQLRQLNDMGFFDFDRNVAALRRSGGSVQGALDSLLNG) constitute a UBA domain.

The protein localises to the nucleus. In terms of biological role, involved, with RAD23 in spindle pole body duplication. Involved in the ubiquitin-proteasome proteolytic pathway. In Saccharomyces cerevisiae (strain ATCC 204508 / S288c) (Baker's yeast), this protein is Ubiquitin domain-containing protein DSK2 (DSK2).